Consider the following 424-residue polypeptide: Histidine--tRNA ligase (424 aa).

The protein belongs to the class-II aminoacyl-tRNA synthetase family. In terms of assembly, homodimer.

The protein resides in the cytoplasm. It catalyses the reaction tRNA(His) + L-histidine + ATP = L-histidyl-tRNA(His) + AMP + diphosphate + H(+). The chain is Histidine--tRNA ligase from Protochlamydia amoebophila (strain UWE25).